The sequence spans 278 residues: MSEGFDILKPTEADIQKLLMAKVHLGASNCTTAMSKYVYKRRSDGVNVIDLNKTYEKIVLAARIIAAVDSPANVCAISGRNFGQRAILKFCNHIGGAFPIAGRFTPGAFTNQIQKAFQEPRLLVLTDPLVDHQAVREASYVNIPIISLCDVDAPLRYVDVVIPCNNKSPHAIGIVWWMLAREVLRLRGTLPRDAEWDVMPDLYFFRDPEEIKKEEEAAAAAKEAEDDTGYTTQWDDAALDADWSATGTGNFAAAPADGNWGATTGGDWAAAGGEEWTN.

2 disordered regions span residues 216-235 (EAAA…TQWD) and 250-278 (NFAA…EWTN). Residues 256–278 (ADGNWGATTGGDWAAAGGEEWTN) show a composition bias toward low complexity.

The protein belongs to the universal ribosomal protein uS2 family. Component of the small ribosomal subunit. Mature ribosomes consist of a small (40S) and a large (60S) subunit. The 40S subunit contains about 33 different proteins and 1 molecule of RNA (18S). The 60S subunit contains about 49 different proteins and 3 molecules of RNA (25S, 5.8S and 5S). Interacts with ribosomal protein S21.

The protein resides in the cytoplasm. Functionally, required for the assembly and/or stability of the 40S ribosomal subunit. Required for the processing of the 20S rRNA-precursor to mature 18S rRNA in a late step of the maturation of 40S ribosomal subunits. This chain is Small ribosomal subunit protein uS2, found in Monosiga brevicollis (Choanoflagellate).